The primary structure comprises 3284 residues: Location of vulva defective 1 (3284 aa).

Positions 1 to 21 (MKKSNFFVLLLLAISAIQIDG) are cleaved as a signal peptide. 5 disordered regions span residues 226 to 326 (ESTS…ITST), 350 to 505 (TTML…GTNP), 623 to 702 (VASS…ADST), 827 to 926 (STSE…ASTE), and 1043 to 1216 (TTTE…SLAT). Low complexity-rich tracts occupy residues 227–326 (STST…ITST) and 350–500 (TTML…TTSS). Over residues 827–913 (STSEVTSTTS…PSDSSSASDS (87 aa)) the composition is skewed to low complexity. Residues 914–926 (MRTTTVDPDASTE) are compositionally biased toward polar residues. A compositionally biased stretch (low complexity) spans 1043-1057 (TTTETPPTTVSSSDD). The span at 1060–1078 (GKTGGTGATGGTGGTGSGG) shows a compositional bias: gly residues. The segment covering 1079–1104 (SATTLSTGDAVRSTTSGSGSGQSSTG) has biased composition (low complexity). Gly residues predominate over residues 1105–1127 (SGAGGSGTTASGSGSGGSSGTGS). Residues 1128–1138 (DGVNSGKTTAL) are compositionally biased toward polar residues. A compositionally biased stretch (low complexity) spans 1163-1192 (GSGSDSNGSSGVSTKSSSGSDTSGSSDSSG). The segment covering 1197–1216 (FSATAQPSTRTTKTRSSLAT) has biased composition (polar residues). Residues 2064 to 2227 (WNNSLQVEII…SVGAFNPTID (164 aa)) enclose the GAIN-B domain. An intrachain disulfide couples Cys2181 to Cys2209. The segment at 2181–2227 (CYFYQKTSDVFNSEGMYPSDGQGMQFVNCSTDHLTMFSVGAFNPTID) is GPS. The chain crosses the membrane as a helical span at residues 2245–2265 (VMIAAVFMLVVYGCLTINAII). The PLAT domain occupies 2288–2411 (YMYVIAVETG…GDGETERLAR (124 aa)). 10 consecutive transmembrane segments (helical) span residues 2453–2473 (DYSVSIIFSLVVVSMISITIL), 2496–2516 (IAFGVGFGVLITFLNSLHILL), 2557–2577 (IIVFPVLMGLIYISGAGMSLM), 2592–2612 (LILWAVVFEPIKGLIWAFLIL), 2672–2692 (LFITIRDMLCFFASLYIMVML), 2945–2965 (MLYIFFSVLIFVKEIVFYLYG), 2994–3014 (WNFMDLIVGALAVASVLAYTI), 3043–3063 (WEIVFSYCLAGAVFFTSCKMI), 3089–3109 (FGIAFLFFSMTFNSVLYAVLG), and 3144–3164 (FAFVVIMLYMIAGSKLVLQLY).

The protein belongs to the polycystin family. In terms of assembly, interacts (via PLAT domain) with atp-2 (via N-terminus) and with kin-10 (via C-terminus). Interacts (via C-terminus) with isoform a of stam-1/pqn-19 (via C-terminus). Post-translationally, autoproteolytically processed at the GPS region of the GAIN-B domain; this cleavage modulates receptor activity. As to expression, exclusively expressed in a subset of three categories of adult male sensory neurons: ray neurons, hook neurons and head cephalic (CEM) neurons.

The protein localises to the membrane. It is found in the cell projection. Its subcellular location is the cilium. Functionally, required for two aspects of male mating behavior: response to hermaphrodite contact and vulva location. Acts in the same pathway as pkd-2 and atp-2 in response behavior. May be required for ciliary targeting of pkd-2. This chain is Location of vulva defective 1 (lov-1), found in Caenorhabditis elegans.